We begin with the raw amino-acid sequence, 211 residues long: Pyridoxine/pyridoxamine 5'-phosphate oxidase (211 aa).

Substrate-binding positions include 7-10 (RTDY) and K65. FMN-binding positions include 60-65 (RIVLIK), 75-76 (FT), R81, and K82. Residues Y122, R126, and S130 each coordinate substrate. FMN contacts are provided by residues 139-140 (QS) and W183. Residue 189–191 (RLH) participates in substrate binding. Residue R193 participates in FMN binding.

Belongs to the pyridoxamine 5'-phosphate oxidase family. Homodimer. It depends on FMN as a cofactor.

The enzyme catalyses pyridoxamine 5'-phosphate + O2 + H2O = pyridoxal 5'-phosphate + H2O2 + NH4(+). It carries out the reaction pyridoxine 5'-phosphate + O2 = pyridoxal 5'-phosphate + H2O2. The protein operates within cofactor metabolism; pyridoxal 5'-phosphate salvage; pyridoxal 5'-phosphate from pyridoxamine 5'-phosphate: step 1/1. It functions in the pathway cofactor metabolism; pyridoxal 5'-phosphate salvage; pyridoxal 5'-phosphate from pyridoxine 5'-phosphate: step 1/1. Catalyzes the oxidation of either pyridoxine 5'-phosphate (PNP) or pyridoxamine 5'-phosphate (PMP) into pyridoxal 5'-phosphate (PLP). This is Pyridoxine/pyridoxamine 5'-phosphate oxidase from Herminiimonas arsenicoxydans.